The sequence spans 158 residues: NAD(P)H-quinone oxidoreductase subunit J, chloroplastic (158 aa).

The protein belongs to the complex I 30 kDa subunit family. As to quaternary structure, NDH is composed of at least 16 different subunits, 5 of which are encoded in the nucleus.

It localises to the plastid. Its subcellular location is the chloroplast thylakoid membrane. It carries out the reaction a plastoquinone + NADH + (n+1) H(+)(in) = a plastoquinol + NAD(+) + n H(+)(out). The enzyme catalyses a plastoquinone + NADPH + (n+1) H(+)(in) = a plastoquinol + NADP(+) + n H(+)(out). Functionally, NDH shuttles electrons from NAD(P)H:plastoquinone, via FMN and iron-sulfur (Fe-S) centers, to quinones in the photosynthetic chain and possibly in a chloroplast respiratory chain. The immediate electron acceptor for the enzyme in this species is believed to be plastoquinone. Couples the redox reaction to proton translocation, and thus conserves the redox energy in a proton gradient. The sequence is that of NAD(P)H-quinone oxidoreductase subunit J, chloroplastic from Jasminum nudiflorum (Winter jasmine).